Reading from the N-terminus, the 824-residue chain is Leucine--tRNA ligase (824 aa).

Positions 42-52 match the 'HIGH' region motif; it reads PYPSGRIHMGH. Residues 581–585 carry the 'KMSKS' region motif; the sequence is KMSKS. An ATP-binding site is contributed by lysine 584.

It belongs to the class-I aminoacyl-tRNA synthetase family.

The protein resides in the cytoplasm. The enzyme catalyses tRNA(Leu) + L-leucine + ATP = L-leucyl-tRNA(Leu) + AMP + diphosphate. The sequence is that of Leucine--tRNA ligase from Geobacter sulfurreducens (strain ATCC 51573 / DSM 12127 / PCA).